A 311-amino-acid polypeptide reads, in one-letter code: Ornithine carbamoyltransferase (311 aa).

Residues 56-59 (STRT), Q83, R107, and 134-137 (HPTQ) each bind carbamoyl phosphate. L-ornithine is bound by residues N166, D230, and 234–235 (SM). Carbamoyl phosphate is bound by residues 270–271 (CL) and K298.

It belongs to the aspartate/ornithine carbamoyltransferase superfamily. OTCase family.

The protein localises to the cytoplasm. The enzyme catalyses carbamoyl phosphate + L-ornithine = L-citrulline + phosphate + H(+). It functions in the pathway amino-acid degradation; L-arginine degradation via ADI pathway; carbamoyl phosphate from L-arginine: step 2/2. In terms of biological role, reversibly catalyzes the transfer of the carbamoyl group from carbamoyl phosphate (CP) to the N(epsilon) atom of ornithine (ORN) to produce L-citrulline. The sequence is that of Ornithine carbamoyltransferase from Ignicoccus hospitalis (strain KIN4/I / DSM 18386 / JCM 14125).